A 363-amino-acid polypeptide reads, in one-letter code: UDP-3-O-acylglucosamine N-acyltransferase (363 aa).

The Proton acceptor role is filled by histidine 239. Residues leucine 342–lysine 363 are disordered.

The protein belongs to the transferase hexapeptide repeat family. LpxD subfamily. As to quaternary structure, homotrimer.

It carries out the reaction a UDP-3-O-[(3R)-3-hydroxyacyl]-alpha-D-glucosamine + a (3R)-hydroxyacyl-[ACP] = a UDP-2-N,3-O-bis[(3R)-3-hydroxyacyl]-alpha-D-glucosamine + holo-[ACP] + H(+). It participates in bacterial outer membrane biogenesis; LPS lipid A biosynthesis. Catalyzes the N-acylation of UDP-3-O-acylglucosamine using 3-hydroxyacyl-ACP as the acyl donor. Is involved in the biosynthesis of lipid A, a phosphorylated glycolipid that anchors the lipopolysaccharide to the outer membrane of the cell. The protein is UDP-3-O-acylglucosamine N-acyltransferase of Syntrophus aciditrophicus (strain SB).